A 271-amino-acid polypeptide reads, in one-letter code: Putative phosphoenolpyruvate synthase regulatory protein (271 aa).

An ADP-binding site is contributed by 151 to 158 (GVSRSGKT).

It belongs to the pyruvate, phosphate/water dikinase regulatory protein family. PSRP subfamily.

It catalyses the reaction [pyruvate, water dikinase] + ADP = [pyruvate, water dikinase]-phosphate + AMP + H(+). The enzyme catalyses [pyruvate, water dikinase]-phosphate + phosphate + H(+) = [pyruvate, water dikinase] + diphosphate. Functionally, bifunctional serine/threonine kinase and phosphorylase involved in the regulation of the phosphoenolpyruvate synthase (PEPS) by catalyzing its phosphorylation/dephosphorylation. The sequence is that of Putative phosphoenolpyruvate synthase regulatory protein from Burkholderia mallei (strain NCTC 10247).